Consider the following 295-residue polypeptide: Probable endonuclease 4 (295 aa).

Zn(2+) contacts are provided by His-78, His-118, Glu-154, Asp-188, His-191, His-225, Asp-238, His-240, and Glu-270.

The protein belongs to the AP endonuclease 2 family. The cofactor is Zn(2+).

It catalyses the reaction Endonucleolytic cleavage to 5'-phosphooligonucleotide end-products.. In terms of biological role, endonuclease IV plays a role in DNA repair. It cleaves phosphodiester bonds at apurinic or apyrimidinic (AP) sites, generating a 3'-hydroxyl group and a 5'-terminal sugar phosphate. The chain is Probable endonuclease 4 from Vibrio parahaemolyticus serotype O3:K6 (strain RIMD 2210633).